The primary structure comprises 1662 residues: Putative mediator of RNA polymerase II transcription subunit 23 (1662 aa).

Disordered stretches follow at residues 1–24 (MYTN…PQQQ), 95–139 (QQRP…QSQP), 206–252 (TTTP…STTN), and 1530–1572 (GYDD…QDTN). The stretch at 39 to 122 (QQQNIQQQQQ…QQSQQQQASL (84 aa)) forms a coiled coil. Over residues 95 to 124 (QQRPQTPQQNAQQQSQQSQQSQQQQASLGQ) the composition is skewed to low complexity. Positions 1532 to 1560 (DDDDDDEDDDYYDEDDEDEDDDNEDDQQD) are enriched in acidic residues.

This sequence belongs to the Mediator complex subunit 23 family. As to quaternary structure, component of the Mediator complex.

It is found in the nucleus. Component of the Mediator complex, a coactivator involved in the regulated transcription of nearly all RNA polymerase II-dependent genes. Mediator functions as a bridge to convey information from gene-specific regulatory proteins to the basal RNA polymerase II transcription machinery. Mediator is recruited to promoters by direct interactions with regulatory proteins and serves as a scaffold for the assembly of a functional preinitiation complex with RNA polymerase II and the general transcription factors. The sequence is that of Putative mediator of RNA polymerase II transcription subunit 23 (med23) from Dictyostelium discoideum (Social amoeba).